A 322-amino-acid chain; its full sequence is Malate dehydrogenase (322 aa).

NAD(+) is bound by residues 10-15 and Asp34; that span reads GSGMIG. Substrate is bound by residues Arg83 and Arg89. Residues Asn96 and 119 to 121 contribute to the NAD(+) site; that span reads ITN. Substrate is bound by residues Asn121 and Arg152. His176 functions as the Proton acceptor in the catalytic mechanism.

Belongs to the LDH/MDH superfamily. MDH type 3 family.

The enzyme catalyses (S)-malate + NAD(+) = oxaloacetate + NADH + H(+). Its function is as follows. Catalyzes the reversible oxidation of malate to oxaloacetate. The protein is Malate dehydrogenase of Mesorhizobium japonicum (strain LMG 29417 / CECT 9101 / MAFF 303099) (Mesorhizobium loti (strain MAFF 303099)).